The chain runs to 221 residues: Putative NAD(P)H nitroreductase YfkO (221 aa).

Residues 15-17 (RHA) and 73-75 (QKQ) contribute to the FMN site. Residue 157–162 (AAAQIG) coordinates NAD(+). Residues 169–170 (EG) and arginine 211 each bind FMN.

It belongs to the nitroreductase family. As to quaternary structure, monomer. The cofactor is FMN.

The chain is Putative NAD(P)H nitroreductase YfkO (yfkO) from Bacillus subtilis (strain 168).